Reading from the N-terminus, the 503-residue chain is Annexin A11 (503 aa).

Composition is skewed to pro residues over residues 80–117 (GYPP…PGMP) and 123–167 (PGAP…PVPS). The tract at residues 80 to 172 (GYPPVPPGGF…QPVPSYPGYS (93 aa)) is disordered. Annexin repeat units lie at residues 198-269 (FDPL…ALMK), 270-341 (TPVL…SLSQ), 353-425 (SLVQ…AVVK), and 429-500 (NTPA…KICG). 2 positions are modified to N6-acetyllysine: Lys-246 and Lys-253. An N6-acetyllysine modification is found at Lys-477.

Belongs to the annexin family. Interacts with S100A6. Interacts with PDCD6 in a calcium-dependent manner. Interacts with KIF23 during cytokinesis.

The protein resides in the cytoplasm. It localises to the melanosome. It is found in the nucleus envelope. The protein localises to the nucleus. Its subcellular location is the nucleoplasm. The protein resides in the cytoskeleton. It localises to the spindle. Its function is as follows. Required for midbody formation and completion of the terminal phase of cytokinesis. Binds specifically to calcyclin in a calcium-dependent manner. This Mus musculus (Mouse) protein is Annexin A11 (Anxa11).